The primary structure comprises 2408 residues: Protein ELYS (2408 aa).

Residues 1–492 (MQNLEAQVTG…SGLIHFACTG (492 aa)) are seven-bladed beta propeller repeats. Residues 1016–2408 (YSLPSLVWRE…AKPVTRRKMR (1393 aa)) are disordered. The segment covering 1124–1145 (PLTSSDTDNNQTPHKSPLLKTS) has biased composition (polar residues). The span at 1457–1466 (NDQDSEEIEE) shows a compositional bias: acidic residues. 2 stretches are compositionally biased toward polar residues: residues 1705 to 1719 (INEG…QSTL) and 1735 to 1750 (PADS…TLPT). The span at 2136–2149 (QASKIQEDLSDTPR) shows a compositional bias: basic and acidic residues. Sufficient for chromatin-binding regions lie at residues 2281–2359 (STQY…PVEI) and 2359–2408 (IKLI…RKMR). The segment at 2281–2408 (STQYVFSPPS…AKPVTRRKMR (128 aa)) is sufficient to block nuclear pore assembly. The segment at residues 2329 to 2341 (SKPRGRPPKHKAK) is a DNA-binding region (a.T hook). The segment covering 2331-2348 (PRGRPPKHKAKAVTRVLK) has biased composition (basic residues). Residues 2378 to 2389 (DSTEAKGAEKIS) are compositionally biased toward basic and acidic residues.

Belongs to the ELYS family. Interacts with the Nup107-160 subcomplex of the NPC.

The protein resides in the nucleus. Its subcellular location is the nuclear pore complex. The protein localises to the cytoplasm. It localises to the nucleoplasm. Required for the assembly of a functional nuclear pore complex (NPC) on the surface of chromosomes as nuclei form at the end of mitosis. May initiate NPC assembly by binding to chromatin and recruiting the Nup107-160 subcomplex, which may in turn recruit membrane vesicles containing pom121 and tmem48/ndc1. Association with chromatin may require the presence of the mcm2-mcm7 complex, suggesting a mechanism for coordination of nuclear assembly and the inactivation of replication licensing. The polypeptide is Protein ELYS (ahctf1) (Xenopus laevis (African clawed frog)).